The primary structure comprises 332 residues: Fructose-1,6-bisphosphatase class 1 (332 aa).

The Mg(2+) site is built by Glu-93, Asp-113, Leu-115, and Asp-116. Residues 116–119 (DGSS), Asn-209, Tyr-235, and Lys-272 contribute to the substrate site. Glu-278 is a Mg(2+) binding site.

Belongs to the FBPase class 1 family. As to quaternary structure, homotetramer. Mg(2+) serves as cofactor.

The protein localises to the cytoplasm. It carries out the reaction beta-D-fructose 1,6-bisphosphate + H2O = beta-D-fructose 6-phosphate + phosphate. It functions in the pathway carbohydrate biosynthesis; gluconeogenesis. This is Fructose-1,6-bisphosphatase class 1 from Syntrophus aciditrophicus (strain SB).